A 332-amino-acid polypeptide reads, in one-letter code: Packaging enzyme P4 (332 aa).

The interval 111–138 is involved in the regulation and mechanisms of transcription, replication and genome packaging; the sequence is RWPSEGIYSGVTALMGATGSGKSITLNE. 126–133 contributes to the ATP binding site; the sequence is GATGSGKS. Residues 310-332 are disordered; that stretch reads LERGSVDTDDRNSAPRRGANFSL. Residues 313-322 show a composition bias toward basic and acidic residues; sequence GSVDTDDRNS.

In terms of assembly, homohexamer. Part of the packaging complex composed of RDRP, P4 and P7.

It localises to the virion. The enzyme catalyses a ribonucleoside 5'-triphosphate + H2O = a ribonucleoside 5'-diphosphate + phosphate + H(+). In terms of biological role, packaging motor with helicase and translocase activities. Part of the packaging complex that packages the viral RNA segments, replicate them into a double-stranded form and transcribe them. is one of the structural proteins of the polyhedral procapsid, which is responsible for genomic replication and transcription. Displays single-stranded RNA-stimulated NTPase activity. This Pseudomonas savastanoi pv. phaseolicola (Pseudomonas syringae pv. phaseolicola) protein is Packaging enzyme P4 (P4).